The following is a 272-amino-acid chain: Putative UTP--glucose-1-phosphate uridylyltransferase (272 aa).

The protein belongs to the UDPGP type 2 family.

It catalyses the reaction alpha-D-glucose 1-phosphate + UTP + H(+) = UDP-alpha-D-glucose + diphosphate. The protein is Putative UTP--glucose-1-phosphate uridylyltransferase (ytdA) of Bacillus subtilis (strain 168).